The primary structure comprises 212 residues: Large ribosomal subunit protein uL3 (212 aa).

Residues 129–156 (RRGPMGHGSKNHRAPGSTGAGTTPGRIY) form a disordered region. Positions 142–153 (APGSTGAGTTPG) are enriched in low complexity.

It belongs to the universal ribosomal protein uL3 family. Part of the 50S ribosomal subunit. Forms a cluster with proteins L14 and L19.

In terms of biological role, one of the primary rRNA binding proteins, it binds directly near the 3'-end of the 23S rRNA, where it nucleates assembly of the 50S subunit. The protein is Large ribosomal subunit protein uL3 of Acaryochloris marina (strain MBIC 11017).